We begin with the raw amino-acid sequence, 386 residues long: 2-isopropylmalate synthase (386 aa).

A Pyruvate carboxyltransferase domain is found at 12–265; sequence VRIFDTTLRD…EVNIKTYKLY (254 aa). Residues Asp21, His203, His205, and Asn239 each coordinate a divalent metal cation.

The protein belongs to the alpha-IPM synthase/homocitrate synthase family. As to quaternary structure, homodimer. A divalent metal cation is required as a cofactor.

It carries out the reaction 3-methyl-2-oxobutanoate + acetyl-CoA + H2O = (2S)-2-isopropylmalate + CoA + H(+). The protein operates within amino-acid biosynthesis; L-leucine biosynthesis; L-leucine from 3-methyl-2-oxobutanoate: step 1/4. Its function is as follows. Catalyzes the condensation of the acetyl group of acetyl-CoA with 3-methyl-2-oxobutanoate (2-oxoisovalerate) to form 3-carboxy-3-hydroxy-4-methylpentanoate (2-isopropylmalate). Carries out the first step of the leucine biosynthesis pathway. The chain is 2-isopropylmalate synthase (leuA) from Sulfurisphaera tokodaii (strain DSM 16993 / JCM 10545 / NBRC 100140 / 7) (Sulfolobus tokodaii).